Here is a 372-residue protein sequence, read N- to C-terminus: Queuine tRNA-ribosyltransferase (372 aa).

Aspartate 92 acts as the Proton acceptor in catalysis. Substrate is bound by residues 92–96, aspartate 146, glutamine 188, and glycine 215; that span reads DSGGF. Residues 246-252 are RNA binding; the sequence is GIGTLRE. Catalysis depends on aspartate 265, which acts as the Nucleophile. An RNA binding; important for wobble base 34 recognition region spans residues 270-274; it reads TRLGR. The Zn(2+) site is built by cysteine 303, cysteine 305, cysteine 308, and histidine 334.

This sequence belongs to the queuine tRNA-ribosyltransferase family. As to quaternary structure, homodimer. Within each dimer, one monomer is responsible for RNA recognition and catalysis, while the other monomer binds to the replacement base PreQ1. Zn(2+) is required as a cofactor.

The enzyme catalyses 7-aminomethyl-7-carbaguanine + guanosine(34) in tRNA = 7-aminomethyl-7-carbaguanosine(34) in tRNA + guanine. It participates in tRNA modification; tRNA-queuosine biosynthesis. Functionally, catalyzes the base-exchange of a guanine (G) residue with the queuine precursor 7-aminomethyl-7-deazaguanine (PreQ1) at position 34 (anticodon wobble position) in tRNAs with GU(N) anticodons (tRNA-Asp, -Asn, -His and -Tyr). Catalysis occurs through a double-displacement mechanism. The nucleophile active site attacks the C1' of nucleotide 34 to detach the guanine base from the RNA, forming a covalent enzyme-RNA intermediate. The proton acceptor active site deprotonates the incoming PreQ1, allowing a nucleophilic attack on the C1' of the ribose to form the product. After dissociation, two additional enzymatic reactions on the tRNA convert PreQ1 to queuine (Q), resulting in the hypermodified nucleoside queuosine (7-(((4,5-cis-dihydroxy-2-cyclopenten-1-yl)amino)methyl)-7-deazaguanosine). The polypeptide is Queuine tRNA-ribosyltransferase (Prochlorococcus marinus (strain MIT 9313)).